The following is a 317-amino-acid chain: Transcription factor elt-3 (317 aa).

The interval 1 to 34 is disordered; that stretch reads METANYYLPSPPYSSTSSSDSRESRMNTPIPTTY. A GATA-type zinc finger spans residues 244 to 268; sequence CSNCKTRETTLWRRNGEGGVECNAC. Residues 290-317 form a disordered region; the sequence is KRNRRPRNESPNSAIRNTHQRHGHAAAC. Residues 307-317 show a composition bias toward basic residues; the sequence is THQRHGHAAAC.

In terms of assembly, interacts with skn-1; interaction may enhance transcriptional activation of target genes. As to expression, expressed in head, trunk and tail. Expression decreases with age in the hypodermal cells and the pharyngeal-intestinal valve cells in the head, eventually showing little or no expression in about 14 day old worms. Expressed in hypodermal, but not in intestinal, cells at 1 day of age. Expression in the hypodermal and intestinal cells in the trunk region decreases quickly between day 3 and day 5 of adulthood. Expression in the tail between days 3 and 14 stays approximately uniform.

Its subcellular location is the nucleus. Functionally, transcription factor. Required, in concert with signal transducer and transcription factor sta-2, for up-regulation of the vacuolar H(+)-ATPase and acceleration of lysosome maturation at molt. Involved in regulating hypodermal development, perhaps acting downstream of transcription factor elt-1. Modulates environmentally induced changes in collagen gene expression, including rol-6, sqt-1, lon-3, and dpy-13. Involved in regulating expression of various genes, including gst-4, sod-3, ugt-9, and col-144. In response to oxidative stress, required to up-regulate expression of gst-4 mRNA. Regulated by the Insulin/IGF-1-like signaling (IIS) mediated pathway. Plays a role in longevity. May regulate the expression of genes that control sensitivity to osmotic stress, in conjunction with the GATA region-binding transcription factor elt-2. May form a transcriptional circuit with GATA factors egl-18 and elt-6. The chain is Transcription factor elt-3 from Caenorhabditis elegans.